Consider the following 240-residue polypeptide: Proline-rich antigen homolog (240 aa).

Pro residues-rich tracts occupy residues 1-31 and 38-78; these read MTEQ…PAAP and APPP…PPGP. The tract at residues 1-78 is disordered; it reads MTEQPPPGGS…GGYAPPPPGP (78 aa). In terms of domain architecture, RDD spans 89–233; it reads TPWITRVLAA…KRQTLADKIM (145 aa). Helical transmembrane passes span 98–118, 142–162, and 203–223; these read AFID…IMLV, SMIG…YLVW, and LAHF…LWDA.

The protein belongs to the mycobacterial Pra family.

It localises to the cell membrane. The polypeptide is Proline-rich antigen homolog (Mycobacterium tuberculosis (strain CDC 1551 / Oshkosh)).